A 211-amino-acid polypeptide reads, in one-letter code: MNNEPTKIPQATAKRLPLYYRFLENLHASGKQRVSSSELSEAVKVDSATIRRDFSYFGALGKKGYGYNVNYLLTFFRKTLHQDELTKVMLIGVGNLGTALLNYNFSKNNHTQIVMAFDVDREKIGNTVSGVKIENLDNLENKITSDVSVAILTVPAAVAQKTADRLVNAGVKGILNFTPARIAVPEHVRVHHIDLSVELQALIYFLKHYPL.

Positions 18 to 57 (LYYRFLENLHASGKQRVSSSELSEAVKVDSATIRRDFSYF) form a DNA-binding region, H-T-H motif. NAD(+) is bound at residue 92–97 (GVGNLG).

It belongs to the transcriptional regulatory Rex family. As to quaternary structure, homodimer.

Its subcellular location is the cytoplasm. Its function is as follows. Modulates transcription in response to changes in cellular NADH/NAD(+) redox state. This chain is Redox-sensing transcriptional repressor Rex, found in Halalkalibacterium halodurans (strain ATCC BAA-125 / DSM 18197 / FERM 7344 / JCM 9153 / C-125) (Bacillus halodurans).